The primary structure comprises 83 residues: Male-specific opa-containing protein (83 aa).

The N-terminal stretch at 1-18 (MNFIQIAVLFVLVAVALA) is a signal peptide. The interval 23–83 (DPANLPAPEA…NVNHNVITIG (61 aa)) is disordered. Positions 28-49 (PAPEAAAAPPAAAAAPPAAAAA) are enriched in low complexity. The segment covering 50–59 (PPAPPAPPAA) has biased composition (pro residues).

As to expression, adult male abdomen.

Its function is as follows. May be a male specific regulatory factor. In Drosophila melanogaster (Fruit fly), this protein is Male-specific opa-containing protein (msopa).